Here is a 231-residue protein sequence, read N- to C-terminus: Cytolethal distending toxin subunit A (231 aa).

A signal peptide spans 1 to 15 (MRLLFFLLITLLFAA). C16 carries N-palmitoyl cysteine lipidation. C16 carries S-diacylglycerol cysteine lipidation. The disordered stretch occupies residues 20–51 (PKVHQPKHSSKTEKDLGIGLSPTPPPNERIPG). Residues 99–110 (WALKPRNWVWGY) form a mediates binding to target cells region. Residues 130-217 (SNGQVIIKNM…SSNLDQQWYI (88 aa)) enclose the Ricin B-type lectin domain.

As to quaternary structure, heterotrimer of 3 subunits, CdtA, CdtB and CdtC.

It localises to the cell outer membrane. Functionally, CDTs are cytotoxins which induce cell distension, growth arrest in G2/M phase, nucleus swelling, and chromatin fragmentation in HeLa cells. In Helicobacter hepaticus (strain ATCC 51449 / 3B1), this protein is Cytolethal distending toxin subunit A (cdtA).